The sequence spans 155 residues: MQGLVLQLTRAGFLMLLWVFIWSVLRILKTDIYAPTGAVMMRRGLALRGTLLGARQRRHAARYLVVTEGALTGARITLSEQPVLIGRADDSTLVLTDDYASTRHARLSMRGSEWYVEDLGSTNGTYLDRAKVTTAVRVPIGTPVRIGKTAIELRP.

Residues 6 to 28 traverse the membrane as a helical segment; it reads LQLTRAGFLMLLWVFIWSVLRIL. The residue at position 36 (Thr36) is a Phosphothreonine. Residues 83–132 form the FHA domain; that stretch reads VLIGRADDSTLVLTDDYASTRHARLSMRGSEWYVEDLGSTNGTYLDRAKV.

Phosphorylated by PknB. Dephosphorylated by PstP.

The protein localises to the cell membrane. This is FHA domain-containing protein FhaB (fhaB) from Mycobacterium tuberculosis (strain CDC 1551 / Oshkosh).